The sequence spans 471 residues: ATP synthase subunit beta (471 aa).

Residue 156–163 (GGAGVGKT) participates in ATP binding.

This sequence belongs to the ATPase alpha/beta chains family. In terms of assembly, F-type ATPases have 2 components, CF(1) - the catalytic core - and CF(0) - the membrane proton channel. CF(1) has five subunits: alpha(3), beta(3), gamma(1), delta(1), epsilon(1). CF(0) has three main subunits: a(1), b(2) and c(9-12). The alpha and beta chains form an alternating ring which encloses part of the gamma chain. CF(1) is attached to CF(0) by a central stalk formed by the gamma and epsilon chains, while a peripheral stalk is formed by the delta and b chains.

It localises to the cell membrane. The catalysed reaction is ATP + H2O + 4 H(+)(in) = ADP + phosphate + 5 H(+)(out). In terms of biological role, produces ATP from ADP in the presence of a proton gradient across the membrane. The catalytic sites are hosted primarily by the beta subunits. This is ATP synthase subunit beta from Lawsonia intracellularis (strain PHE/MN1-00).